We begin with the raw amino-acid sequence, 150 residues long: Cell division protein SepF (150 aa).

This sequence belongs to the SepF family. Homodimer. Interacts with FtsZ.

Its subcellular location is the cytoplasm. Cell division protein that is part of the divisome complex and is recruited early to the Z-ring. Probably stimulates Z-ring formation, perhaps through the cross-linking of FtsZ protofilaments. Its function overlaps with FtsA. This chain is Cell division protein SepF, found in Clostridium beijerinckii (strain ATCC 51743 / NCIMB 8052) (Clostridium acetobutylicum).